A 302-amino-acid polypeptide reads, in one-letter code: Aquaporin NIP3-1 (302 aa).

Residues 1–31 (MEPGSTPPNGSAPATPGTPAPLFSSGGPRVD) are disordered. Over residues 7–21 (PPNGSAPATPGTPAP) the composition is skewed to low complexity. 2 helical membrane-spanning segments follow: residues 76–96 (LGAE…APIV) and 102–122 (GAIS…TVIL). An NPA 1 motif is present at residues 133–135 (NPS). Helical transmembrane passes span 149–169 (LQVP…AFAL), 193–213 (AFFT…AVAT), and 217–237 (AVGE…ILVA). The short motif at 246–248 (NPV) is the NPA 2 element. Residues 264 to 284 (WIYLLAPTLGALAGASVYKAV) traverse the membrane as a helical segment.

The protein belongs to the MIP/aquaporin (TC 1.A.8) family. NIP (TC 1.A.8.12) subfamily.

It localises to the membrane. Functionally, aquaporins facilitate the transport of water and small neutral solutes across cell membranes. This chain is Aquaporin NIP3-1 (NIP3-1), found in Zea mays (Maize).